The chain runs to 364 residues: Palmitoyltransferase ZDHHC9 (364 aa).

Over 1 to 35 (MSVMVVRKKVTRKWEKLPGRNTFCCDGRVMMARQK) the chain is Cytoplasmic. A helical membrane pass occupies residues 36 to 56 (GIFYLTLFLILGTCTLFFAFE). The Lumenal portion of the chain corresponds to 57-63 (CRYLAVQ). The chain crosses the membrane as a helical span at residues 64 to 84 (QSPAIPVFAAMLFLFSMATLL). Residues 85-183 (RASFSDPGVI…NCVGKRNYRY (99 aa)) lie on the Cytoplasmic side of the membrane. In terms of domain architecture, DHHC spans 139 to 189 (KYCYTCKIFRPPRASHCSICDNCVERFDHHCPWVGNCVGKRNYRYFYLFIL). C169 functions as the S-palmitoyl cysteine intermediate in the catalytic mechanism. A helical membrane pass occupies residues 184-204 (FYLFILSLSLLTIYVFAFNIV). The Lumenal portion of the chain corresponds to 205 to 228 (YVALKSLKIGFLETLKETPGTVLE). A helical membrane pass occupies residues 229–249 (VLICFFTLWSVVGLTGFHTFL). The Cytoplasmic segment spans residues 250-364 (VALNQTTNED…PPQEAAEAEK (115 aa)). Residues 303-364 (PLEESGSRPP…PPQEAAEAEK (62 aa)) form a disordered region. Residues 310-323 (RPPSTQETSSSLLP) show a composition bias toward polar residues. Residues 346–356 (EMPPPEPPEPP) are compositionally biased toward pro residues.

The protein belongs to the DHHC palmitoyltransferase family. ERF2/ZDHHC9 subfamily. In terms of assembly, interacts with GOLGA7.

The protein resides in the endoplasmic reticulum membrane. It localises to the golgi apparatus membrane. The enzyme catalyses L-cysteinyl-[protein] + hexadecanoyl-CoA = S-hexadecanoyl-L-cysteinyl-[protein] + CoA. In terms of biological role, palmitoyltransferase that catalyzes the addition of palmitate onto various protein substrates, such as ADRB2, GSDMD, HRAS, NRAS and CGAS. The ZDHHC9-GOLGA7 complex is a palmitoyltransferase specific for HRAS and NRAS. May have a palmitoyltransferase activity toward the beta-2 adrenergic receptor/ADRB2 and therefore regulate G protein-coupled receptor signaling. Acts as a regulator of innate immunity by catalyzing palmitoylation of CGAS, thereby promoting CGAS homodimerization and cyclic GMP-AMP synthase activity. Activates pyroptosis by catalyzing palmitoylation of gasdermin-D (GSDMD), thereby promoting membrane translocation and pore formation of GSDMD. The polypeptide is Palmitoyltransferase ZDHHC9 (ZDHHC9) (Pongo abelii (Sumatran orangutan)).